We begin with the raw amino-acid sequence, 343 residues long: Anthranilate phosphoribosyltransferase (343 aa).

5-phospho-alpha-D-ribose 1-diphosphate contacts are provided by residues Gly-81, 84-85 (GD), 91-94 (NVST), 109-117 (KHGNRSVSS), and Ser-121. Gly-81 is an anthranilate binding site. Ser-93 is a Mg(2+) binding site. Position 112 (Asn-112) interacts with anthranilate. Residue Arg-167 coordinates anthranilate. The Mg(2+) site is built by Asp-226 and Glu-227.

The protein belongs to the anthranilate phosphoribosyltransferase family. Homodimer. Mg(2+) serves as cofactor.

It carries out the reaction N-(5-phospho-beta-D-ribosyl)anthranilate + diphosphate = 5-phospho-alpha-D-ribose 1-diphosphate + anthranilate. The protein operates within amino-acid biosynthesis; L-tryptophan biosynthesis; L-tryptophan from chorismate: step 2/5. In terms of biological role, catalyzes the transfer of the phosphoribosyl group of 5-phosphorylribose-1-pyrophosphate (PRPP) to anthranilate to yield N-(5'-phosphoribosyl)-anthranilate (PRA). This is Anthranilate phosphoribosyltransferase from Chromohalobacter salexigens (strain ATCC BAA-138 / DSM 3043 / CIP 106854 / NCIMB 13768 / 1H11).